A 303-amino-acid chain; its full sequence is Sushi domain-containing protein 6 (303 aa).

Positions 1 to 39 are cleaved as a signal peptide; that stretch reads MCHGRIAPKSTSVFAVASVGHGVFLPLVILCTLLGDGLA. The Sushi domain maps to 40–104; it reads SVCPLPPEPE…KPAMEISCRL (65 aa). The Extracellular portion of the chain corresponds to 40–120; the sequence is SVCPLPPEPE…HTSLGVPTLS (81 aa). Cystine bridges form between Cys-42–Cys-89 and Cys-74–Cys-102. A helical membrane pass occupies residues 121-141; the sequence is IVASTASSVALILLLVVLFVL. The Cytoplasmic portion of the chain corresponds to 142 to 303; that stretch reads LQPKLKSFHH…TDDIPLLKEA (162 aa). 2 disordered regions span residues 199–237 and 263–282; these read VLSEGSGPSGRSVPREQQLPDQGACSSAGGEDEAPGQSG and GSGNRQLAHKETADSENSDI.

Its subcellular location is the membrane. Its function is as follows. May play a role in growth-suppressive activity and cell death. May be involved in the production of chemokine molecules in umbilical vein endothelial cells (HUVECs) cultured in THP1 monocyte LPS-induced medium. Plays a role in preventing tumor onset. The polypeptide is Sushi domain-containing protein 6 (Homo sapiens (Human)).